The chain runs to 91 residues: Putative regulatory protein DSY2730 (91 aa).

It belongs to the RemA family.

The sequence is that of Putative regulatory protein DSY2730 from Desulfitobacterium hafniense (strain Y51).